Consider the following 208-residue polypeptide: Ribosomal RNA large subunit methyltransferase E (208 aa).

5 residues coordinate S-adenosyl-L-methionine: Gly63, Trp65, Asp83, Asp99, and Asp124. Lys164 serves as the catalytic Proton acceptor.

The protein belongs to the class I-like SAM-binding methyltransferase superfamily. RNA methyltransferase RlmE family.

The protein resides in the cytoplasm. It carries out the reaction uridine(2552) in 23S rRNA + S-adenosyl-L-methionine = 2'-O-methyluridine(2552) in 23S rRNA + S-adenosyl-L-homocysteine + H(+). Its function is as follows. Specifically methylates the uridine in position 2552 of 23S rRNA at the 2'-O position of the ribose in the fully assembled 50S ribosomal subunit. This chain is Ribosomal RNA large subunit methyltransferase E, found in Hamiltonella defensa subsp. Acyrthosiphon pisum (strain 5AT).